An 88-amino-acid chain; its full sequence is UPF0298 protein Bcer98_2635 (88 aa).

It belongs to the UPF0298 family.

It localises to the cytoplasm. The polypeptide is UPF0298 protein Bcer98_2635 (Bacillus cytotoxicus (strain DSM 22905 / CIP 110041 / 391-98 / NVH 391-98)).